The sequence spans 164 residues: Endoribonuclease YbeY (164 aa).

Residues histidine 125, histidine 129, and histidine 135 each contribute to the Zn(2+) site.

Belongs to the endoribonuclease YbeY family. It depends on Zn(2+) as a cofactor.

It is found in the cytoplasm. Its function is as follows. Single strand-specific metallo-endoribonuclease involved in late-stage 70S ribosome quality control and in maturation of the 3' terminus of the 16S rRNA. The protein is Endoribonuclease YbeY of Paramagnetospirillum magneticum (strain ATCC 700264 / AMB-1) (Magnetospirillum magneticum).